Consider the following 210-residue polypeptide: Protein DrgA (210 aa).

The protein belongs to the nitroreductase family. FMN is required as a cofactor.

In terms of biological role, controls resistance to the herbicide Dinoseb and metronidazole. Involved in detoxification of Dinoseb via the reduction of the nitro group(s) and this process is accompanied by the formation of toxic superoxide anions. The chain is Protein DrgA (drgA) from Synechocystis sp. (strain ATCC 27184 / PCC 6803 / Kazusa).